We begin with the raw amino-acid sequence, 226 residues long: Ras-related protein RABA4a (226 aa).

An N-acetylthreonine modification is found at Thr-2. 24–31 lines the GTP pocket; sequence GDSAVGKS. An Effector region motif is present at residues 46–54; sequence SKATIGVEF. GTP-binding positions include 72–76, 130–133, and 160–161; these read DTAGQ, NKSD, and SA. The tract at residues 189–226 is disordered; it reads ASEDQENGNPGSLAGKKIDIVPGPGQVIPNKSNMCCNS. The segment covering 217-226 has biased composition (polar residues); the sequence is PNKSNMCCNS. 2 S-geranylgeranyl cysteine lipidation sites follow: Cys-223 and Cys-224.

It belongs to the small GTPase superfamily. Rab family. Interacts with TCTP1.

The protein resides in the cell membrane. In terms of biological role, intracellular vesicle trafficking and protein transport. This is Ras-related protein RABA4a from Arabidopsis thaliana (Mouse-ear cress).